The sequence spans 334 residues: D-fructose 1,6-bisphosphatase class 2/sedoheptulose 1,7-bisphosphatase (334 aa).

4 residues coordinate Mn(2+): aspartate 33, glutamate 57, aspartate 85, and glutamate 88. Substrate is bound by residues 88–90 (EGT), tyrosine 119, 164–166 (RAR), and 186–188 (DGD). Glutamate 213 provides a ligand contact to Mn(2+).

Belongs to the FBPase class 2 family. As to quaternary structure, homotetramer. Mn(2+) is required as a cofactor.

It catalyses the reaction beta-D-fructose 1,6-bisphosphate + H2O = beta-D-fructose 6-phosphate + phosphate. It carries out the reaction D-sedoheptulose 1,7-bisphosphate + H2O = D-sedoheptulose 7-phosphate + phosphate. The protein operates within carbohydrate biosynthesis; Calvin cycle. In terms of biological role, catalyzes the hydrolysis of fructose 1,6-bisphosphate (Fru 1,6-P2) and sedoheptulose 1,7-bisphosphate (Sed 1,7-P2) to fructose 6-phosphate and sedoheptulose 7-phosphate, respectively. The sequence is that of D-fructose 1,6-bisphosphatase class 2/sedoheptulose 1,7-bisphosphatase from Synechococcus sp. (strain RCC307).